A 618-amino-acid chain; its full sequence is Very-long-chain aldehyde decarbonylase GL1-3 (618 aa).

Transmembrane regions (helical) follow at residues 9-29 (LSSW…GPVV), 46-66 (TSWC…MLFF), 91-111 (MVIM…FPAT), 121-141 (GWAI…YWAH), 174-194 (LESL…FMAG), 289-309 (DFVF…PFAF), and 315-335 (LPFA…GFML). Residues 127-267 (VLHVAVSEPA…MPLFDALGGT (141 aa)) enclose the Fatty acid hydroxylase domain.

Belongs to the sterol desaturase family. As to quaternary structure, homodimer. As to expression, expressed in germinating seeds and stamens.

It is found in the endoplasmic reticulum membrane. The catalysed reaction is a long-chain fatty aldehyde + 2 NADPH + O2 + H(+) = a long-chain alkane + formate + 2 NADP(+) + H2O. Aldehyde decarbonylase involved in the conversion of aldehydes to alkanes. Core component of a very-long-chain alkane synthesis complex. This Oryza sativa subsp. japonica (Rice) protein is Very-long-chain aldehyde decarbonylase GL1-3.